The sequence spans 540 residues: Beta-2-syntrophin (540 aa).

The tract at residues 73 to 114 is disordered; sequence LPNGGGAGDSLPGSPSRGLGPPSPPAPPRGPAGEAGASPPVR. Residues 81–92 show a composition bias toward low complexity; it reads DSLPGSPSRGLG. Positions 93 to 102 are enriched in pro residues; the sequence is PPSPPAPPRG. Serine 95, serine 110, serine 129, serine 211, serine 222, serine 233, serine 393, and serine 395 each carry phosphoserine. Low complexity predominate over residues 103-112; sequence PAGEAGASPP. Residues 115-198 enclose the PDZ domain; that stretch reads RVRVVKQEAG…EVLLEVKFIR (84 aa). 2 PH domains span residues 163–300 and 325–437; these read ILSV…TNIM and EVKH…QGCH. The disordered stretch occupies residues 220–240; the sequence is PQSPSFSGSEDSGSPKHQNST. Over residues 222 to 231 the composition is skewed to low complexity; it reads SPSFSGSEDS. Residues 484–540 enclose the SU domain; that stretch reads PFERLKMSADDGIRNLYLDFGGPEGELTMDLHSCPKPIVFVLHTFLSAKVTRMGLLV. Positions 518–540 are calmodulin-binding; the sequence is PKPIVFVLHTFLSAKVTRMGLLV.

Belongs to the syntrophin family. Monomer and homodimer. Interacts with the other members of the syntrophin family: SNTA1 and SNTB1; and with the sodium channel proteins SCN4A and SCN5A. Interacts with SAST, MAST205, microtubules and microtubule-associated proteins. Interacts with the dystrophin protein DMD and related proteins DTNA and UTRN, and with the neuroregulin receptor ERBB4. Interacts with PTPRN when phosphorylated, protecting PTPRN from protein cleavage by CAPN1. Dephosphorylation upon insulin stimulation disrupts the interaction with PTPRN and results in the cleavage of PTPRN. Interacts with DTNB. Post-translationally, phosphorylated. Partially dephosphorylated upon insulin stimulation. In terms of tissue distribution, ubiquitous. Isoform 1 is the predominant isoform. Weak level of isoform 2 is present in all tested tissues, except in liver and heart where it is highly expressed.

Its subcellular location is the membrane. The protein localises to the cytoplasmic vesicle. It localises to the secretory vesicle membrane. It is found in the cell junction. The protein resides in the cytoplasm. Its subcellular location is the cytoskeleton. Adapter protein that binds to and probably organizes the subcellular localization of a variety of membrane proteins. May link various receptors to the actin cytoskeleton and the dystrophin glycoprotein complex. May play a role in the regulation of secretory granules via its interaction with PTPRN. In Homo sapiens (Human), this protein is Beta-2-syntrophin (SNTB2).